Reading from the N-terminus, the 421-residue chain is CaM kinase-like vesicle-associated protein (421 aa).

In terms of domain architecture, Protein kinase spans 24 to 284 (YDLGQVVKSE…AQEAIAHEWI (261 aa)). The interval 326 to 421 (ASEQGDTGAS…PQMLPQRKGY (96 aa)) is disordered. Low complexity-rich tracts occupy residues 330-340 (GDTGASGLAAG) and 390-406 (QQQA…QQAR).

It belongs to the protein kinase superfamily. CAMK Ser/Thr protein kinase family. As to quaternary structure, interacts with calmodulin, in the presence of calcium. Ca(2+) serves as cofactor. Ubiquitously expressed.

Its subcellular location is the cytoplasmic vesicle membrane. Functionally, does not appear to have detectable kinase activity. The protein is CaM kinase-like vesicle-associated protein (camkv) of Takifugu rubripes (Japanese pufferfish).